A 158-amino-acid chain; its full sequence is 2-C-methyl-D-erythritol 2,4-cyclodiphosphate synthase (158 aa).

The a divalent metal cation site is built by Asp-9 and His-11. 4-CDP-2-C-methyl-D-erythritol 2-phosphate-binding positions include 9 to 11 (DVH) and 35 to 36 (HS). Position 43 (His-43) interacts with a divalent metal cation. 4-CDP-2-C-methyl-D-erythritol 2-phosphate-binding positions include 57-59 (DIG), 62-66 (FPDTD), 133-136 (TTTE), Phe-140, and Arg-143.

It belongs to the IspF family. Homotrimer. A divalent metal cation serves as cofactor.

It carries out the reaction 4-CDP-2-C-methyl-D-erythritol 2-phosphate = 2-C-methyl-D-erythritol 2,4-cyclic diphosphate + CMP. It participates in isoprenoid biosynthesis; isopentenyl diphosphate biosynthesis via DXP pathway; isopentenyl diphosphate from 1-deoxy-D-xylulose 5-phosphate: step 4/6. Functionally, involved in the biosynthesis of isopentenyl diphosphate (IPP) and dimethylallyl diphosphate (DMAPP), two major building blocks of isoprenoid compounds. Catalyzes the conversion of 4-diphosphocytidyl-2-C-methyl-D-erythritol 2-phosphate (CDP-ME2P) to 2-C-methyl-D-erythritol 2,4-cyclodiphosphate (ME-CPP) with a corresponding release of cytidine 5-monophosphate (CMP). The chain is 2-C-methyl-D-erythritol 2,4-cyclodiphosphate synthase from Actinobacillus pleuropneumoniae serotype 7 (strain AP76).